We begin with the raw amino-acid sequence, 239 residues long: Ras-like protein B (239 aa).

GTP is bound by residues 13–18 (GVGKTA), 29–35 (VETYDPT), 59–60 (AG), 139–142 (NKSD), and 169–171 (SAK). Positions 32-40 (YDPTIEDSY) match the Effector region motif. Positions 191–227 (RQQQQGGRAQDRRPTGLGPMRDRDAGPEYPKTFRPDR) are disordered. Residues 199 to 226 (AQDRRPTGLGPMRDRDAGPEYPKTFRPD) show a composition bias toward basic and acidic residues.

It belongs to the small GTPase superfamily. Ras family. As to quaternary structure, interacts with mpkA.

It catalyses the reaction GTP + H2O = GDP + phosphate + H(+). In terms of biological role, ras-like protein involved in the activation of Ras protein signal transduction. Ras proteins bind GDP/GTP and possess intrinsic GTPase activity. Plays a role in hyphal morphology and conidiophore development. Required for full virulence. The sequence is that of Ras-like protein B from Aspergillus fumigatus (strain ATCC MYA-4609 / CBS 101355 / FGSC A1100 / Af293) (Neosartorya fumigata).